A 225-amino-acid polypeptide reads, in one-letter code: ATP-dependent dethiobiotin synthetase BioD (225 aa).

An ATP-binding site is contributed by 13 to 18; the sequence is NVGKTL. A Mg(2+)-binding site is contributed by T17. The active site involves K38. T42 is a substrate binding site. ATP is bound by residues D55, 116-119, 176-177, and 205-207; these read EGAG, NH, and PWL. Mg(2+)-binding residues include D55 and E116.

This sequence belongs to the dethiobiotin synthetase family. As to quaternary structure, homodimer. The cofactor is Mg(2+).

It localises to the cytoplasm. The enzyme catalyses (7R,8S)-7,8-diammoniononanoate + CO2 + ATP = (4R,5S)-dethiobiotin + ADP + phosphate + 3 H(+). Its pathway is cofactor biosynthesis; biotin biosynthesis; biotin from 7,8-diaminononanoate: step 1/2. Functionally, catalyzes a mechanistically unusual reaction, the ATP-dependent insertion of CO2 between the N7 and N8 nitrogen atoms of 7,8-diaminopelargonic acid (DAPA, also called 7,8-diammoniononanoate) to form a ureido ring. This is ATP-dependent dethiobiotin synthetase BioD from Baumannia cicadellinicola subsp. Homalodisca coagulata.